The primary structure comprises 202 residues: Dephospho-CoA kinase (202 aa).

One can recognise a DPCK domain in the interval 4 to 201 (VIGLTGGIAS…QKYLAMSKQN (198 aa)). Residue 12-17 (ASGKTT) participates in ATP binding.

The protein belongs to the CoaE family.

Its subcellular location is the cytoplasm. It catalyses the reaction 3'-dephospho-CoA + ATP = ADP + CoA + H(+). The protein operates within cofactor biosynthesis; coenzyme A biosynthesis; CoA from (R)-pantothenate: step 5/5. In terms of biological role, catalyzes the phosphorylation of the 3'-hydroxyl group of dephosphocoenzyme A to form coenzyme A. The polypeptide is Dephospho-CoA kinase (Vibrio vulnificus (strain YJ016)).